A 595-amino-acid polypeptide reads, in one-letter code: Actin-histidine N-methyltransferase (595 aa).

A disordered region spans residues 1 to 22 (MGKKSRVKTQKSGTGATATVSP). Residues 10–20 (QKSGTGATATV) are compositionally biased toward polar residues. Residues arginine 75, 104–106 (EGF), arginine 254, 275–279 (DMCNH), and 325–327 (SGF) contribute to the S-adenosyl-L-methionine site. The SET domain maps to 94 to 314 (EGFEMVNFKE…AGEQIYIFYG (221 aa)). Serine 513 carries the post-translational modification Phosphoserine. The disordered stretch occupies residues 552 to 595 (LVNGENCIPNGTRSENEDLNQEENKRAVEDAKGSSSDSTDAVKK). A compositionally biased stretch (basic and acidic residues) spans 573 to 583 (EENKRAVEDAK). Residues 584–595 (GSSSDSTDAVKK) are compositionally biased toward polar residues.

This sequence belongs to the class V-like SAM-binding methyltransferase superfamily. SETD3 actin-histidine methyltransferase family. In terms of assembly, interacts with MYOD1. Phosphorylated by GSK3B, which is required for recognition by the SCF(FBXW7) complex and subsequent degradation. In terms of processing, ubiquitinated by the SCF(FBXW7) complex following phosphorylation by GSK3B, leading to its degradation by the proteasome.

It is found in the cytoplasm. Its subcellular location is the nucleus. The catalysed reaction is L-histidyl-[protein] + S-adenosyl-L-methionine = N(tele)-methyl-L-histidyl-[protein] + S-adenosyl-L-homocysteine + H(+). Protein-histidine N-methyltransferase that specifically mediates 3-methylhistidine (tele-methylhistidine) methylation of actin at 'His-73'. Histidine methylation of actin is required for smooth muscle contraction of the laboring uterus during delivery. Does not have protein-lysine N-methyltransferase activity and probably only catalyzes histidine methylation of actin. This is Actin-histidine N-methyltransferase from Otolemur garnettii (Small-eared galago).